We begin with the raw amino-acid sequence, 264 residues long: Apolipoprotein A-I (264 aa).

An N-terminal signal peptide occupies residues 1–18; that stretch reads MRGVLVTLAVLFLTGTQA. 2 consecutive repeat copies span residues 67-88 and 89-110. The interval 67–264 is 10 X approximate tandem repeats; it reads LKLADNLDTL…LLDEVQKTMA (198 aa). One copy of the 3; half-length repeat lies at 111-121; the sequence is KDLEEVKEKIR. Repeat copies occupy residues 122-143, 144-165, 166-187, 188-209, and 210-231. The 9; half-length repeat unit spans residues 232 to 242; that stretch reads PLVQEFKERLT. Residues 243–264 form repeat 10; sequence PYAENLKNRLIDLLDEVQKTMA.

This sequence belongs to the apolipoprotein A1/A4/E family. In terms of tissue distribution, major protein of VLDL, HDL, LDL and in chylomicrons. Expressed in a number of tissues including liver, small intestine, lung, kidney, heart and muscle with highest expression in liver and small intestine.

It localises to the secreted. In terms of biological role, participates in the reverse transport of cholesterol from tissues to the liver for excretion by promoting cholesterol efflux from tissues and by acting as a cofactor for the lecithin cholesterol acyltransferase (LCAT). The chain is Apolipoprotein A-I (APOA1) from Coturnix japonica (Japanese quail).